The chain runs to 321 residues: Cytochrome f (321 aa).

Positions 1-37 are cleaved as a signal peptide; sequence MKIYRQIKQSFSITKIVFSFFISLLLNLVAQPTICQA. Heme is bound by residues Phe38, Cys58, Cys61, and His62. Residues 287–306 form a helical membrane-spanning segment; it reads VQGLIAFFISVVLAQIFLVL.

Belongs to the cytochrome f family. The 4 large subunits of the cytochrome b6-f complex are cytochrome b6, subunit IV (17 kDa polypeptide, petD), cytochrome f and the Rieske protein, while the 4 small subunits are PetG, PetL, PetM and PetN. The complex functions as a dimer. Heme serves as cofactor.

It localises to the plastid. Its subcellular location is the cyanelle thylakoid membrane. Its function is as follows. Component of the cytochrome b6-f complex, which mediates electron transfer between photosystem II (PSII) and photosystem I (PSI), cyclic electron flow around PSI, and state transitions. The sequence is that of Cytochrome f (petA) from Cyanophora paradoxa.